We begin with the raw amino-acid sequence, 268 residues long: Enoyl-[acyl-carrier-protein] reductase [NADH] 2 (268 aa).

NAD(+) is bound by residues G14, 20 to 21, Q41, 65 to 66, and I93; these read SI and DV. Catalysis depends on proton acceptor residues Y146 and Y156. NAD(+) contacts are provided by residues K163 and 192–196; that span reads IRTLA.

The protein belongs to the short-chain dehydrogenases/reductases (SDR) family. FabI subfamily.

Its subcellular location is the cell inner membrane. It catalyses the reaction a 2,3-saturated acyl-[ACP] + NAD(+) = a (2E)-enoyl-[ACP] + NADH + H(+). Its pathway is lipid metabolism; fatty acid biosynthesis. The chain is Enoyl-[acyl-carrier-protein] reductase [NADH] 2 (fabI2) from Rhizobium meliloti (strain 1021) (Ensifer meliloti).